The following is a 214-amino-acid chain: RNA pyrophosphohydrolase (214 aa).

Positions 6 to 149 constitute a Nudix hydrolase domain; that stretch reads GFRPNVGIIL…KRDVYQLALT (144 aa). Positions 38 to 59 match the Nudix box motif; that stretch reads GGIKYGETPMQAMYRELHEETG.

This sequence belongs to the Nudix hydrolase family. RppH subfamily. A divalent metal cation is required as a cofactor.

Its function is as follows. Accelerates the degradation of transcripts by removing pyrophosphate from the 5'-end of triphosphorylated RNA, leading to a more labile monophosphorylated state that can stimulate subsequent ribonuclease cleavage. The chain is RNA pyrophosphohydrolase from Burkholderia cenocepacia (strain HI2424).